Here is a 122-residue protein sequence, read N- to C-terminus: Large ribosomal subunit protein uL14 (122 aa).

The protein belongs to the universal ribosomal protein uL14 family. As to quaternary structure, part of the 50S ribosomal subunit. Forms a cluster with proteins L3 and L19. In the 70S ribosome, L14 and L19 interact and together make contacts with the 16S rRNA in bridges B5 and B8.

Its function is as follows. Binds to 23S rRNA. Forms part of two intersubunit bridges in the 70S ribosome. This chain is Large ribosomal subunit protein uL14, found in Chlamydia trachomatis serovar A (strain ATCC VR-571B / DSM 19440 / HAR-13).